A 404-amino-acid chain; its full sequence is D-galactonate dehydratase family member Ent638_1932 (404 aa).

Residues Asn-37 and His-122 each coordinate substrate. Catalysis depends on Tyr-159, which acts as the Proton donor/acceptor. Asp-212 contributes to the Mg(2+) binding site. His-214 acts as the Proton donor/acceptor in catalysis. Glu-238 and Glu-264 together coordinate Mg(2+). 5 residues coordinate substrate: Glu-264, Arg-285, His-314, Asp-318, and Glu-341.

This sequence belongs to the mandelate racemase/muconate lactonizing enzyme family. GalD subfamily. Mg(2+) is required as a cofactor.

It carries out the reaction D-mannonate = 2-dehydro-3-deoxy-D-gluconate + H2O. Its function is as follows. Has low D-mannonate dehydratase activity (in vitro), suggesting that this is not a physiological substrate and that it has no significant role in D-mannonate degradation in vivo. Has no detectable activity with a panel of 70 other acid sugars (in vitro). The sequence is that of D-galactonate dehydratase family member Ent638_1932 from Enterobacter sp. (strain 638).